Consider the following 475-residue polypeptide: MNIGRAIKVTQAVVDIKFEGELPKIFNALKSKLKYKDKELVLEVSQHIGDNIVRCIAMDSTDGMSRGDEFVDTGAPISVPIGRSTLGRIFNVVGELIDECGPLKGKYNLEPIHRAPPSFTEQRIQEEVLVTGIKVIDLLAPYLKGGKIGLFGGAGVGKTVLIMELINNIAKAHKGFSVFAGVGERTREGNDLYHEMITSNVININEHEKSQAVLVYGQMNEPPGARARVALTALTMAEYFRDRENQDVLFFVDNIFRFTQAGSEISALLGRIPSAVGYQPTLATDMGAMQERIASTTSGSITSVQAIYVPADDLTDPAPATTFSHLDATTVLSRQIAEMGIYPAVDPLDSTSQSLSAEIIGEEHYNVASEVKRILQTYKSLQDIIAILGMDELSDEDKIIVDRARKIQKFLSQPFHVAEIFTGMPGKFVSLSDTVSSFKGIVEGKYDHLPEAAFYMVGNIDEAIKKAELIQAEAK.

152-159 is an ATP binding site; that stretch reads GGAGVGKT.

This sequence belongs to the ATPase alpha/beta chains family. In terms of assembly, F-type ATPases have 2 components, CF(1) - the catalytic core - and CF(0) - the membrane proton channel. CF(1) has five subunits: alpha(3), beta(3), gamma(1), delta(1), epsilon(1). CF(0) has three main subunits: a(1), b(2) and c(9-12). The alpha and beta chains form an alternating ring which encloses part of the gamma chain. CF(1) is attached to CF(0) by a central stalk formed by the gamma and epsilon chains, while a peripheral stalk is formed by the delta and b chains.

It localises to the cell membrane. It catalyses the reaction ATP + H2O + 4 H(+)(in) = ADP + phosphate + 5 H(+)(out). Produces ATP from ADP in the presence of a proton gradient across the membrane. The catalytic sites are hosted primarily by the beta subunits. This is ATP synthase subunit beta from Wolbachia pipientis wMel.